A 330-amino-acid chain; its full sequence is Adenylate isopentenyltransferase 8, chloroplastic (330 aa).

The transit peptide at 1–35 (MQNLTSTFVSPSMIPITSPRLRLPPPRSVVPMTTV) directs the protein to the chloroplast. 50–57 (GATGSGKS) contacts ATP.

Belongs to the IPP transferase family. In terms of tissue distribution, expressed in roots and in immature seeds with highest expression in the chalazal endosperm.

The protein resides in the plastid. It is found in the chloroplast. The catalysed reaction is dimethylallyl diphosphate + ADP = N(6)-(dimethylallyl)adenosine 5'-diphosphate + diphosphate. It carries out the reaction dimethylallyl diphosphate + ATP = N(6)-(dimethylallyl)adenosine 5'-triphosphate + diphosphate. In terms of biological role, involved in cytokinin biosynthesis. Catalyzes the transfer of an isopentenyl group from dimethylallyl diphosphate (DMAPP) to ATP and ADP. The polypeptide is Adenylate isopentenyltransferase 8, chloroplastic (IPT8) (Arabidopsis thaliana (Mouse-ear cress)).